We begin with the raw amino-acid sequence, 460 residues long: Fumarate hydratase class II (460 aa).

Residues serine 95–threonine 97, histidine 126–aspartate 129, serine 136–asparagine 138, and threonine 184 contribute to the substrate site. Residue histidine 185 is the Proton donor/acceptor of the active site. Serine 315 is a catalytic residue. Residues serine 316 and lysine 321 to asparagine 323 contribute to the substrate site.

It belongs to the class-II fumarase/aspartase family. Fumarase subfamily. As to quaternary structure, homotetramer.

It is found in the cytoplasm. The enzyme catalyses (S)-malate = fumarate + H2O. It participates in carbohydrate metabolism; tricarboxylic acid cycle; (S)-malate from fumarate: step 1/1. Involved in the TCA cycle. Catalyzes the stereospecific interconversion of fumarate to L-malate. The protein is Fumarate hydratase class II of Chlamydia caviae (strain ATCC VR-813 / DSM 19441 / 03DC25 / GPIC) (Chlamydophila caviae).